Reading from the N-terminus, the 413-residue chain is Phosphatidylcholine:ceramide cholinephosphotransferase 1 (413 aa).

One can recognise an SAM domain in the interval 7–70; the sequence is WSPKKVADWL…LDMIETLKME (64 aa). Phosphoserine is present on serine 8. The next 5 helical transmembrane spans lie at 136 to 156, 184 to 204, 215 to 235, 276 to 296, and 304 to 324; these read FLAFLYALSCFVLTTVMISVV, FSICEINGMILVGLWLIQWLL, FFCIVGTLYLYRCITMYVTTL, MCGDYLYSGHTVMLTLTYLFI, and LWWYHWICWLLSVVGIFCILL. Histidine 285 is a catalytic residue. Residues 325–413 lie on the Cytoplasmic side of the membrane; sequence AHDHYTVDVV…VKYSRLVNDT (89 aa). Active-site residues include histidine 328 and aspartate 332.

The protein belongs to the sphingomyelin synthase family. Brain, heart, kidney, liver, muscle and stomach.

It localises to the golgi apparatus membrane. The enzyme catalyses an N-acylsphing-4-enine + a 1,2-diacyl-sn-glycero-3-phosphocholine = a sphingomyelin + a 1,2-diacyl-sn-glycerol. The catalysed reaction is an N-acylsphinganine + a 1,2-diacyl-sn-glycero-3-phosphocholine = an N-acylsphinganine-1-phosphocholine + a 1,2-diacyl-sn-glycerol. It catalyses the reaction an N-acyl-(4R)-4-hydroxysphinganine + a 1,2-diacyl-sn-glycero-3-phosphocholine = an N-acyl-(4R)-4-hydroxysphinganine-phosphocholine + a 1,2-diacyl-sn-glycerol. It carries out the reaction 1-(9Z-octadecenoyl)-2-acyl-sn-3-glycerol + a sphingomyelin = a 1-(9Z-octadecenoyl)-2-acyl-sn-glycero-3-phosphocholine + an N-acylsphing-4-enine. The enzyme catalyses N-hexadecanoylsphinganine + a 1,2-diacyl-sn-glycero-3-phosphocholine = N-hexadecanoyl-sphinganine-1-phosphocholine + a 1,2-diacyl-sn-glycerol. The catalysed reaction is N-hexadecanoyl-(4R)-hydroxysphinganine + a 1,2-diacyl-sn-glycero-3-phosphocholine = N-hexadecanoyl-(4R)-hydroxysphinganine-phosphocholine + a 1,2-diacyl-sn-glycerol. It catalyses the reaction an N-acylsphing-4-enine + a 1,2-diacyl-sn-glycero-3-phosphoethanolamine = an N-acylsphing-4-enine 1-phosphoethanolamine + a 1,2-diacyl-sn-glycerol. The protein operates within sphingolipid metabolism. With respect to regulation, inhibited by bacterial PC-phospholipase C inhibitor D609. Functionally, major sphingomyelin synthase at the Golgi apparatus. Catalyzes the reversible transfer of phosphocholine moiety in sphingomyelin biosynthesis: in the forward reaction transfers phosphocholine head group of phosphatidylcholine (PC) on to ceramide (CER) to form ceramide phosphocholine (sphingomyelin, SM) and diacylglycerol (DAG) as by-product, and in the reverse reaction transfers phosphocholine from SM to DAG to form PC and CER. The direction of the reaction depends on the levels of CER and DAG in Golgi membranes. Converts the newly synthesized CER, that is transported from the endoplasmic reticulum to the trans-Golgi by the Cer transport protein (CERT), to SM. Can form a heteromeric complex with glucosylceramide synthase (GCS) increasing SMS activity and reducing glucosylceramide synthesis, a critical mechanism that controls the metabolic fate of CER in the Golgi. Does not use free phosphorylcholine or CDP-choline as donor. Can also transfer phosphoethanolamine head group of phosphatidylethanolamine (PE) on to CER to form ceramide phosphoethanolamine (CPE). Regulates receptor-mediated signal transduction via mitogenic DAG and proapoptotic CER, as well as via SM, a structural component of membrane rafts that serve as platforms for signal transduction and protein sorting. Plays a role in secretory transport via regulation of DAG pool at the Golgi apparatus and its downstream effects on PRKD1. The polypeptide is Phosphatidylcholine:ceramide cholinephosphotransferase 1 (SGMS1) (Homo sapiens (Human)).